Reading from the N-terminus, the 261-residue chain is Triosephosphate isomerase (261 aa).

Residues asparagine 11 and lysine 13 each coordinate D-glyceraldehyde 3-phosphate. Residue histidine 102 is the Electrophile of the active site. Glutamate 174 acts as the Proton acceptor in catalysis. The D-glyceraldehyde 3-phosphate site is built by glycine 180, leucine 239, and glycine 241.

The protein belongs to the triosephosphate isomerase family. In terms of assembly, homodimer.

The catalysed reaction is D-glyceraldehyde 3-phosphate = dihydroxyacetone phosphate. It participates in carbohydrate biosynthesis; gluconeogenesis. Its pathway is carbohydrate degradation; glycolysis; D-glyceraldehyde 3-phosphate from glycerone phosphate: step 1/1. Functionally, catalyzes the interconversion of glyceraldehyde 3-phosphate and dihydroxyacetone phosphate in the glycolytic and gluconeogenic pathways. In Entamoeba histolytica (strain ATCC 30459 / HM-1:IMSS / ABRM), this protein is Triosephosphate isomerase.